The sequence spans 109 residues: Probable endoribonuclease MazF5 (109 aa).

The protein belongs to the PemK/MazF family. As to quaternary structure, forms a complex with cognate antitoxin MazE5.

In terms of biological role, toxic component of a type II toxin-antitoxin (TA) system. Upon expression in M.smegmatis inhibits colony formation. Its toxic effect is neutralized by coexpression with cognate antitoxin MazE5. Probably an endoribonuclease. The protein is Probable endoribonuclease MazF5 (mazF5) of Mycobacterium tuberculosis (strain ATCC 25618 / H37Rv).